Consider the following 70-residue polypeptide: U2-agatoxin-Ao1d (70 aa).

Positions 1-20 are cleaved as a signal peptide; sequence MRAIIYLLLISAMVFSMTKA. Residues 21–34 constitute a propeptide that is removed on maturation; the sequence is VPEEEGLQLSEDER. Intrachain disulfides connect cysteine 37-cysteine 53, cysteine 44-cysteine 58, and cysteine 52-cysteine 68. Leucine 69 is subject to Leucine amide.

Belongs to the neurotoxin 01 (U2-agtx) family. Expressed by the venom gland.

Its subcellular location is the secreted. Its function is as follows. Insect active toxin causing rapid but reversible paralysis in crickets. No activity shown in mammals. Does not show effect on mammalian voltage-gated calcium channels. In Agelena orientalis (Funnel-web spider), this protein is U2-agatoxin-Ao1d.